The primary structure comprises 206 residues: uncharacterized protein (206 aa).

Positions 1–22 (MPKLRLIGLTLLALSATAVSHA) are cleaved as a signal peptide. Positions 23-89 (EETRYVSDEL…IPLKQLSTEP (67 aa)) constitute an SH3b domain. A helical transmembrane segment spans residues 169-191 (IIMQWFMYGGGVLGLGLLLGLVL).

The protein to H.influenzae HI_1605.

The protein localises to the membrane. This is an uncharacterized protein from Escherichia coli O157:H7.